A 220-amino-acid chain; its full sequence is Small ribosomal subunit protein uS2 (220 aa).

It belongs to the universal ribosomal protein uS2 family.

This is Small ribosomal subunit protein uS2 from Methanococcus maripaludis (strain C5 / ATCC BAA-1333).